Reading from the N-terminus, the 247-residue chain is Ribonuclease 3 (247 aa).

An RNase III domain is found at leucine 21–glycine 149. Glutamate 62 is a binding site for Mg(2+). The active site involves aspartate 66. 2 residues coordinate Mg(2+): asparagine 135 and glutamate 138. The active site involves glutamate 138. The 70-residue stretch at aspartate 176–lysine 245 folds into the DRBM domain.

This sequence belongs to the ribonuclease III family. Homodimer. Mg(2+) is required as a cofactor.

The protein localises to the cytoplasm. It carries out the reaction Endonucleolytic cleavage to 5'-phosphomonoester.. Its function is as follows. Digests double-stranded RNA. Involved in the processing of primary rRNA transcript to yield the immediate precursors to the large and small rRNAs (23S and 16S). Processes some mRNAs, and tRNAs when they are encoded in the rRNA operon. Processes pre-crRNA and tracrRNA of type II CRISPR loci if present in the organism. In Leptospira interrogans serogroup Icterohaemorrhagiae serovar copenhageni (strain Fiocruz L1-130), this protein is Ribonuclease 3.